The primary structure comprises 179 residues: Ribulose bisphosphate carboxylase small subunit, chloroplastic 5 (179 aa).

Residues 1 to 58 constitute a chloroplast transit peptide; the sequence is MASSATMLSSVATAACAAPAQASMVAPFVGLKSASAFPVTQKTATGLSTLPSNGGRVQ.

This sequence belongs to the RuBisCO small chain family. In terms of assembly, heterohexadecamer of 8 large and 8 small subunits.

It is found in the plastid. It localises to the chloroplast. Functionally, ruBisCO catalyzes two reactions: the carboxylation of D-ribulose 1,5-bisphosphate, the primary event in carbon dioxide fixation, as well as the oxidative fragmentation of the pentose substrate. Both reactions occur simultaneously and in competition at the same active site. Although the small subunit is not catalytic it is essential for maximal activity. This chain is Ribulose bisphosphate carboxylase small subunit, chloroplastic 5, found in Fritillaria agrestis (Stinkbells).